Reading from the N-terminus, the 584-residue chain is Chaperonin GroEL 1 (584 aa).

ATP is bound by residues 29-32 (TIGP), 86-90 (DGTTT), Gly413, and Asp492. The disordered stretch occupies residues 523-542 (EPEAAAPGGPGGDPMGGMGG). Residues 530–542 (GGPGGDPMGGMGG) are compositionally biased toward gly residues.

It belongs to the chaperonin (HSP60) family. In terms of assembly, forms a cylinder of 14 subunits composed of two heptameric rings stacked back-to-back. Interacts with the co-chaperonin GroES.

Its subcellular location is the cytoplasm. The enzyme catalyses ATP + H2O + a folded polypeptide = ADP + phosphate + an unfolded polypeptide.. Its function is as follows. Together with its co-chaperonin GroES, plays an essential role in assisting protein folding. The GroEL-GroES system forms a nano-cage that allows encapsulation of the non-native substrate proteins and provides a physical environment optimized to promote and accelerate protein folding. In Prochlorococcus marinus (strain MIT 9312), this protein is Chaperonin GroEL 1.